The following is a 257-amino-acid chain: UPF0246 protein Lcho_2652 (257 aa).

Belongs to the UPF0246 family.

In Leptothrix cholodnii (strain ATCC 51168 / LMG 8142 / SP-6) (Leptothrix discophora (strain SP-6)), this protein is UPF0246 protein Lcho_2652.